A 501-amino-acid chain; its full sequence is G protein-activated inward rectifier potassium channel 1 (501 aa).

Residues 1–40 form a disordered region; it reads MSALRRKFGDDYQVVTTSSSGSGLQPQGPGQDPQQQLVPK. The Cytoplasmic segment spans residues 1 to 80; sequence MSALRRKFGD…LFTTLVDLKW (80 aa). Over residues 18–38 the composition is skewed to low complexity; it reads SSSGSGLQPQGPGQDPQQQLV. Residues 81–105 traverse the membrane as a helical segment; sequence RWNLFIFILTYTVAWLFMASMWWVI. Residues 106 to 129 lie on the Extracellular side of the membrane; it reads AYTRGDLNKAHVGNYTPCVANVYN. A glycan (N-linked (GlcNAc...) asparagine) is linked at Asn119. Residues 130–141 constitute an intramembrane region (helical; Pore-forming); that stretch reads FPSAFLFFIETE. An intramembrane region (pore-forming) is located at residues 142–148; sequence ATIGYGY. The Selectivity filter signature appears at 143–148; it reads TIGYGY. The Extracellular segment spans residues 149–157; it reads RYITDKCPE. A helical membrane pass occupies residues 158 to 179; sequence GIILFLFQSILGSIVDAFLIGC. Residues 180–501 are Cytoplasmic-facing; sequence MFIKMSQPKK…LRKMNSDRFT (322 aa). Residues 182–209 form a polyphosphoinositide (PIP2)-binding region; that stretch reads IKMSQPKKRAETLMFSEHAVISMRDGKL. Residues Ser385 and Ser424 each carry the phosphoserine modification.

Belongs to the inward rectifier-type potassium channel (TC 1.A.2.1) family. KCNJ3 subfamily. Associates with KCNJ5/GIRK4 or KCNJ6/GIRK2 to form a G-protein activated heteromultimer pore-forming unit. The resulting inward current is much larger. Associates with KCNJ9/GIRK3 to form a G-protein activated heteromultimer pore-forming unit.

The protein resides in the membrane. The enzyme catalyses K(+)(in) = K(+)(out). With respect to regulation, heteromultimer composed of KCNJ3/GIRK1 and KCNJ5/GIRK4 is activated by phosphatidylinositol 4,5 biphosphate (PtdIns(4,5)P2). Its function is as follows. Inward rectifier potassium channels are characterized by a greater tendency to allow potassium to flow into the cell rather than out of it. Their voltage dependence is regulated by the concentration of extracellular potassium; as external potassium is raised, the voltage range of the channel opening shifts to more positive voltages. The inward rectification is mainly due to the blockage of outward current by internal magnesium. This potassium channel is controlled by G proteins. This receptor plays a crucial role in regulating the heartbeat. The sequence is that of G protein-activated inward rectifier potassium channel 1 (KCNJ3) from Homo sapiens (Human).